Reading from the N-terminus, the 130-residue chain is S-protein homolog 32 (130 aa).

A signal peptide spans 1–21 (MKYFTIFVFVFSLCMLGHVSG).

It belongs to the plant self-incompatibility (S1) protein family.

It is found in the secreted. This is S-protein homolog 32 from Arabidopsis thaliana (Mouse-ear cress).